The sequence spans 521 residues: Bifunctional purine biosynthesis protein PurH (521 aa).

One can recognise an MGS-like domain in the interval 1 to 145 (MIKQALISVS…KNHRDVTVVV (145 aa)).

The protein belongs to the PurH family.

It catalyses the reaction (6R)-10-formyltetrahydrofolate + 5-amino-1-(5-phospho-beta-D-ribosyl)imidazole-4-carboxamide = 5-formamido-1-(5-phospho-D-ribosyl)imidazole-4-carboxamide + (6S)-5,6,7,8-tetrahydrofolate. The catalysed reaction is IMP + H2O = 5-formamido-1-(5-phospho-D-ribosyl)imidazole-4-carboxamide. Its pathway is purine metabolism; IMP biosynthesis via de novo pathway; 5-formamido-1-(5-phospho-D-ribosyl)imidazole-4-carboxamide from 5-amino-1-(5-phospho-D-ribosyl)imidazole-4-carboxamide (10-formyl THF route): step 1/1. It functions in the pathway purine metabolism; IMP biosynthesis via de novo pathway; IMP from 5-formamido-1-(5-phospho-D-ribosyl)imidazole-4-carboxamide: step 1/1. This Burkholderia ambifaria (strain ATCC BAA-244 / DSM 16087 / CCUG 44356 / LMG 19182 / AMMD) (Burkholderia cepacia (strain AMMD)) protein is Bifunctional purine biosynthesis protein PurH.